Here is a 354-residue protein sequence, read N- to C-terminus: Guanine nucleotide-binding protein alpha-16 subunit (354 aa).

Residue glycine 2 is the site of N-myristoyl glycine attachment. Cysteine 3 is lipidated: S-palmitoyl cysteine. The G-alpha domain maps to 31-354 (KTVKLLLLGA…RDNLRTCGLY (324 aa)). The interval 34–47 (KLLLLGAGESGKST) is G1 motif. GTP-binding positions include 39–46 (GAGESGKS), 174–180 (LRTRIKT), 199–203 (DVGGQ), 268–271 (NKKD), and alanine 326. Mg(2+) is bound by residues serine 46 and threonine 180. A G2 motif region spans residues 172 to 180 (DVLRTRIKT). The tract at residues 195–204 (FVVFDVGGQR) is G3 motif. The G4 motif stretch occupies residues 264–271 (ILFLNKKD). Residues 324–329 (TCATDT) form a G5 motif region.

The protein belongs to the G-alpha family. G proteins are composed of 3 units; alpha, beta and gamma. The alpha chain contains the guanine nucleotide binding site.

Its function is as follows. Guanine nucleotide-binding proteins (G proteins) are involved as modulators or transducers in various transmembrane signaling systems. In the 1-cell embryo, probably together with goa-1, controls nuclear rotation and spindle elongation during mitosis. During the first embryonic cell divisons, plays a role in gpr-1/2 cortical localization and in the proper orientation of EMS blastomere mitotic spindle. This Caenorhabditis briggsae protein is Guanine nucleotide-binding protein alpha-16 subunit (gpa-16).